A 358-amino-acid chain; its full sequence is Cyanide hydratase (358 aa).

A CN hydrolase domain is found at 8-287; sequence YKAAAVNAEP…QGLLFVDIDL (280 aa). E48 functions as the Proton acceptor in the catalytic mechanism. K130 is an active-site residue. C165 (nucleophile) is an active-site residue.

Belongs to the carbon-nitrogen hydrolase superfamily. Nitrilase family. Oligomer of dimers, forming left-handed helical fibers.

The catalysed reaction is formamide = hydrogen cyanide + H2O. Functionally, catalyzes the hydration of cyanide to formamide. Degradation of cyanide may be important for plant pathogenic fungi in infection of cyanogenic plants. This chain is Cyanide hydratase, found in Penicillium rubens (strain ATCC 28089 / DSM 1075 / NRRL 1951 / Wisconsin 54-1255) (Penicillium chrysogenum).